Reading from the N-terminus, the 447-residue chain is tRNA-2-methylthio-N(6)-dimethylallyladenosine synthase (447 aa).

One can recognise an MTTase N-terminal domain in the interval 8–126; it reads KKVVTLAYGC…FQRLLEEAEE (119 aa). [4Fe-4S] cluster-binding residues include C17, C53, C87, C162, C166, and C169. Residues 148-378 form the Radical SAM core domain; it reads AKGKLKAYVN…ITVQNAQSLA (231 aa). The 64-residue stretch at 381–444 folds into the TRAM domain; it reads QEMIGKTCEV…SWTLFGECRA (64 aa).

This sequence belongs to the methylthiotransferase family. MiaB subfamily. As to quaternary structure, monomer. The cofactor is [4Fe-4S] cluster.

The protein localises to the cytoplasm. It catalyses the reaction N(6)-dimethylallyladenosine(37) in tRNA + (sulfur carrier)-SH + AH2 + 2 S-adenosyl-L-methionine = 2-methylsulfanyl-N(6)-dimethylallyladenosine(37) in tRNA + (sulfur carrier)-H + 5'-deoxyadenosine + L-methionine + A + S-adenosyl-L-homocysteine + 2 H(+). Catalyzes the methylthiolation of N6-(dimethylallyl)adenosine (i(6)A), leading to the formation of 2-methylthio-N6-(dimethylallyl)adenosine (ms(2)i(6)A) at position 37 in tRNAs that read codons beginning with uridine. The chain is tRNA-2-methylthio-N(6)-dimethylallyladenosine synthase from Desulfitobacterium hafniense (strain Y51).